The sequence spans 364 residues: tRNA-specific 2-thiouridylase MnmA 1 (364 aa).

ATP is bound by residues Gly10–Ser17 and Met36. Residue Cys106 is the Nucleophile of the active site. Cys106 and Cys204 are disulfide-bonded. Gly130 serves as a coordination point for ATP. The interval Lys154–Gln156 is interaction with tRNA. Residue Cys204 is the Cysteine persulfide intermediate of the active site. The interaction with tRNA stretch occupies residues Arg310 to Tyr311.

The protein belongs to the MnmA/TRMU family.

It is found in the cytoplasm. The catalysed reaction is S-sulfanyl-L-cysteinyl-[protein] + uridine(34) in tRNA + AH2 + ATP = 2-thiouridine(34) in tRNA + L-cysteinyl-[protein] + A + AMP + diphosphate + H(+). Functionally, catalyzes the 2-thiolation of uridine at the wobble position (U34) of tRNA, leading to the formation of s(2)U34. The sequence is that of tRNA-specific 2-thiouridylase MnmA 1 from Caldanaerobacter subterraneus subsp. tengcongensis (strain DSM 15242 / JCM 11007 / NBRC 100824 / MB4) (Thermoanaerobacter tengcongensis).